A 596-amino-acid polypeptide reads, in one-letter code: Elongation factor 4 (596 aa).

One can recognise a tr-type G domain in the interval 2–184; that stretch reads KHIRNFSIIA…VIVDQIPPPE (183 aa). GTP contacts are provided by residues 14 to 19 and 131 to 134; these read DHGKST and NKID.

This sequence belongs to the TRAFAC class translation factor GTPase superfamily. Classic translation factor GTPase family. LepA subfamily.

The protein resides in the cell inner membrane. The catalysed reaction is GTP + H2O = GDP + phosphate + H(+). Required for accurate and efficient protein synthesis under certain stress conditions. May act as a fidelity factor of the translation reaction, by catalyzing a one-codon backward translocation of tRNAs on improperly translocated ribosomes. Back-translocation proceeds from a post-translocation (POST) complex to a pre-translocation (PRE) complex, thus giving elongation factor G a second chance to translocate the tRNAs correctly. Binds to ribosomes in a GTP-dependent manner. The protein is Elongation factor 4 of Shewanella sp. (strain ANA-3).